We begin with the raw amino-acid sequence, 255 residues long: tRNA pseudouridine synthase A (255 aa).

Aspartate 52 (nucleophile) is an active-site residue. Residue tyrosine 111 coordinates substrate.

This sequence belongs to the tRNA pseudouridine synthase TruA family. Homodimer.

The catalysed reaction is uridine(38/39/40) in tRNA = pseudouridine(38/39/40) in tRNA. Functionally, formation of pseudouridine at positions 38, 39 and 40 in the anticodon stem and loop of transfer RNAs. The polypeptide is tRNA pseudouridine synthase A (Cereibacter sphaeroides (strain ATCC 17029 / ATH 2.4.9) (Rhodobacter sphaeroides)).